Here is a 247-residue protein sequence, read N- to C-terminus: Carboxy-S-adenosyl-L-methionine synthase (247 aa).

Residues Tyr39, 64–66 (GCS), 89–90 (DN), 117–118 (DI), Asn132, and Arg199 contribute to the S-adenosyl-L-methionine site.

The protein belongs to the class I-like SAM-binding methyltransferase superfamily. Cx-SAM synthase family. In terms of assembly, homodimer.

It catalyses the reaction prephenate + S-adenosyl-L-methionine = carboxy-S-adenosyl-L-methionine + 3-phenylpyruvate + H2O. Catalyzes the conversion of S-adenosyl-L-methionine (SAM) to carboxy-S-adenosyl-L-methionine (Cx-SAM). The protein is Carboxy-S-adenosyl-L-methionine synthase of Escherichia coli O7:K1 (strain IAI39 / ExPEC).